Reading from the N-terminus, the 141-residue chain is Large ribosomal subunit protein uL11 (141 aa).

The protein belongs to the universal ribosomal protein uL11 family. Part of the ribosomal stalk of the 50S ribosomal subunit. Interacts with L10 and the large rRNA to form the base of the stalk. L10 forms an elongated spine to which L12 dimers bind in a sequential fashion forming a multimeric L10(L12)X complex. In terms of processing, one or more lysine residues are methylated.

Functionally, forms part of the ribosomal stalk which helps the ribosome interact with GTP-bound translation factors. In Nostoc punctiforme (strain ATCC 29133 / PCC 73102), this protein is Large ribosomal subunit protein uL11.